Reading from the N-terminus, the 85-residue chain is Cell division protein ZapA (85 aa).

Residues 60–85 (AVNVVHDYLKLKEELERLKGQIKEKD) are a coiled coil.

This sequence belongs to the ZapA family. Type 2 subfamily. Homodimer. Interacts with FtsZ.

It localises to the cytoplasm. Activator of cell division through the inhibition of FtsZ GTPase activity, therefore promoting FtsZ assembly into bundles of protofilaments necessary for the formation of the division Z ring. It is recruited early at mid-cell but it is not essential for cell division. The protein is Cell division protein ZapA of Bacillus licheniformis (strain ATCC 14580 / DSM 13 / JCM 2505 / CCUG 7422 / NBRC 12200 / NCIMB 9375 / NCTC 10341 / NRRL NRS-1264 / Gibson 46).